The sequence spans 1479 residues: Protein CHROMATIN REMODELING 20 (1479 aa).

Residues 19-49 (EVIVESKEDEMDIIIEENREAEQEVMEVKAR) are a coiled coil. The span at 40–55 (EQEVMEVKARDGRGEQ) shows a compositional bias: basic and acidic residues. The disordered stretch occupies residues 40–109 (EQEVMEVKAR…DELDLEKPLS (70 aa)). The segment covering 76 to 86 (DASSRSESSDF) has biased composition (low complexity). A compositionally biased stretch (basic and acidic residues) spans 94-109 (ILSRRDDELDLEKPLS). Residues 109 to 199 (SEEEIDELIS…EQLDGAGIEL (91 aa)) are a coiled coil. The ADD domain maps to 472-601 (RDDSQNPANN…KKSIELSSDS (130 aa)). The GATA-type; atypical zinc finger occupies 483 to 514 (RCTACNKVAVEVHSHPLLEVIVCMDCKRSIED). A PHD-type; atypical zinc finger spans residues 524–577 (ERHCEWCGHIADLIDCRTCEKLFCASCIKRNIGEEYMSEAQSSGWDCCCCSPIP). The stretch at 578–598 (LQRLTLELEKAMRDKKSIELS) forms a coiled coil. The disordered stretch occupies residues 594-615 (SIELSSDSSSDSSSDNNSVDTD). The segment covering 598 to 615 (SSDSSSDSSSDNNSVDTD) has biased composition (low complexity). One can recognise a Helicase ATP-binding domain in the interval 741-924 (VKSGDKGLGC…YCMVDFVREG (184 aa)). 754-761 (HTMGLGKT) is an ATP binding site. A DEAH box motif is present at residues 875-878 (DEAH). The region spanning 1122 to 1290 (DILSMSADVG…QVHRTISKEE (169 aa)) is the Helicase C-terminal domain. Positions 1400-1423 (SESPVVPKPSPSTQTEPLPQPKGF) are disordered.

It belongs to the SNF2/RAD54 helicase family.

It is found in the nucleus. The protein localises to the chromosome. Its subcellular location is the telomere. Involved in transcriptional regulation and chromatin remodeling. Facilitates DNA replication in multiple cellular environments and is required for efficient replication of a subset of genomic loci. Binds to DNA tandem repeat sequences in both telomeres and euchromatin and in vitro binds DNA quadruplex structures. May help stabilizing G-rich regions into regular chromatin structures by remodeling G4 DNA and incorporating H3.3-containing nucleosomes. Involved in DNA repair of gamma-irradiation-mediated damages. This Arabidopsis thaliana (Mouse-ear cress) protein is Protein CHROMATIN REMODELING 20.